The chain runs to 370 residues: F-box protein At1g66490 (370 aa).

The F-box domain occupies 1 to 46 (MRTISDLPVALVEEILSRVPLTSLSAVRSTCKTWNALSKTQIFGKT).

This chain is F-box protein At1g66490, found in Arabidopsis thaliana (Mouse-ear cress).